The chain runs to 272 residues: Cell wall synthesis protein Wag31 (272 aa).

2 disordered regions span residues 1–22 and 62–109; these read MPLTPADVHNVAFSKPPIGKRG and AARS…SEDT. Positions 30–67 form a coiled coil; sequence AFLDLVENELTRLIEENADLRQRVAELDQELAAARSGA. Low complexity-rich tracts occupy residues 62–76 and 94–105; these read AARSGAGASSQATSS and VYEAPAQPAAPQ. Residue Thr-74 is modified to Phosphothreonine. The stretch at 139-206 forms a coiled coil; it reads LSDARAQAEA…AERKHSEIMG (68 aa). The interval 243 to 272 is disordered; it reads ELGQRGSAAPVDSSANSDASGFGQFNRGNN.

This sequence belongs to the DivIVA family. As to quaternary structure, forms homooligomers. Interacts with PbpB and CwsA. Post-translationally, phosphorylated by PknA.

Its subcellular location is the cytoplasm. In terms of biological role, important for maintaining cell shape and cell wall integrity by localizing peptidoglycan synthesis to the cell poles. Protects PbpB (PBP3, FtsI) from oxidative stress-induced cleavage. The sequence is that of Cell wall synthesis protein Wag31 (wag31) from Mycolicibacterium smegmatis (strain ATCC 700084 / mc(2)155) (Mycobacterium smegmatis).